The sequence spans 61 residues: Small ribosomal subunit protein uS14 (61 aa).

The Zn(2+) site is built by cysteine 24, cysteine 27, cysteine 40, and cysteine 43.

It belongs to the universal ribosomal protein uS14 family. Zinc-binding uS14 subfamily. As to quaternary structure, part of the 30S ribosomal subunit. Contacts proteins S3 and S10. It depends on Zn(2+) as a cofactor.

In terms of biological role, binds 16S rRNA, required for the assembly of 30S particles and may also be responsible for determining the conformation of the 16S rRNA at the A site. The sequence is that of Small ribosomal subunit protein uS14 from Carboxydothermus hydrogenoformans (strain ATCC BAA-161 / DSM 6008 / Z-2901).